Reading from the N-terminus, the 61-residue chain is Photosystem II reaction center protein K (61 aa).

The propeptide occupies 1 to 24 (MLNIFSLICICLNSALYSSSLFFA). A helical membrane pass occupies residues 40–60 (MPVIPLFFFLLAFVWQAAVSF).

It belongs to the PsbK family. PSII is composed of 1 copy each of membrane proteins PsbA, PsbB, PsbC, PsbD, PsbE, PsbF, PsbH, PsbI, PsbJ, PsbK, PsbL, PsbM, PsbT, PsbX, PsbY, PsbZ, Psb30/Ycf12, at least 3 peripheral proteins of the oxygen-evolving complex and a large number of cofactors. It forms dimeric complexes.

The protein localises to the plastid. The protein resides in the chloroplast thylakoid membrane. One of the components of the core complex of photosystem II (PSII). PSII is a light-driven water:plastoquinone oxidoreductase that uses light energy to abstract electrons from H(2)O, generating O(2) and a proton gradient subsequently used for ATP formation. It consists of a core antenna complex that captures photons, and an electron transfer chain that converts photonic excitation into a charge separation. This Panax ginseng (Korean ginseng) protein is Photosystem II reaction center protein K.